A 591-amino-acid chain; its full sequence is Heterogeneous nuclear ribonucleoprotein L-like (591 aa).

Positions 1–120 (MSSSSSSSPK…STEGGGSHHK (120 aa)) are disordered. A compositionally biased stretch (basic and acidic residues) spans 20 to 31 (FESQAKRLKTEE). A Glycyl lysine isopeptide (Lys-Gly) (interchain with G-Cter in SUMO2) cross-link involves residue Lys-28. Residue Ser-37 is modified to Phosphoserine. Residue Thr-48 is modified to Phosphothreonine. Gly residues predominate over residues 57-73 (SGGGDGGDGDGGSGGGG). Acidic residues predominate over residues 74-91 (DGEEGEGGEEGDEGDGDE). Over residues 92-105 (GGSGGDEGGSGGGP) the composition is skewed to gly residues. A phosphoserine mark is found at Ser-107, Ser-117, and Ser-124. 3 consecutive RRM domains span residues 125–199 (PVVH…YSTS), 215–293 (NKVL…YARP), and 384–458 (SVVM…VSKQ). Lys-540 is covalently cross-linked (Glycyl lysine isopeptide (Lys-Gly) (interchain with G-Cter in SUMO2)).

Interacts with HNRNPL.

Its function is as follows. RNA-binding protein that functions as a regulator of alternative splicing for multiple target mRNAs, including PTPRC/CD45 and STAT5A. Required for alternative splicing of PTPRC. In Mus musculus (Mouse), this protein is Heterogeneous nuclear ribonucleoprotein L-like (Hnrnpll).